Here is a 751-residue protein sequence, read N- to C-terminus: Photosystem I P700 chlorophyll a apoprotein A1 (751 aa).

Helical transmembrane passes span 71–94 (VFSA…FHGA), 157–180 (LYCT…FHYH), 196–220 (LNHH…HVSL), 292–310 (TAHH…GHMY), 347–370 (WHAQ…HHMY), 386–412 (LSLF…IFLV), 434–456 (AIIS…LYIH), and 532–550 (FLVH…LILL). 2 residues coordinate [4Fe-4S] cluster: Cys574 and Cys583. The next 2 membrane-spanning stretches (helical) occupy residues 590–611 (HVFL…HFSW) and 665–687 (LSAY…MFLF). Position 676 (His676) interacts with chlorophyll a'. Chlorophyll a contacts are provided by Met684 and Tyr692. Trp693 contributes to the phylloquinone binding site. Residues 725–745 (AVGVAHYLLGGIVTTWAFFLA) traverse the membrane as a helical segment.

This sequence belongs to the PsaA/PsaB family. The PsaA/B heterodimer binds the P700 chlorophyll special pair and subsequent electron acceptors. PSI consists of a core antenna complex that captures photons, and an electron transfer chain that converts photonic excitation into a charge separation. The eukaryotic PSI reaction center is composed of at least 11 subunits. P700 is a chlorophyll a/chlorophyll a' dimer, A0 is one or more chlorophyll a, A1 is one or both phylloquinones and FX is a shared 4Fe-4S iron-sulfur center. is required as a cofactor.

The protein localises to the plastid. The protein resides in the chloroplast thylakoid membrane. The catalysed reaction is reduced [plastocyanin] + hnu + oxidized [2Fe-2S]-[ferredoxin] = oxidized [plastocyanin] + reduced [2Fe-2S]-[ferredoxin]. Its function is as follows. PsaA and PsaB bind P700, the primary electron donor of photosystem I (PSI), as well as the electron acceptors A0, A1 and FX. PSI is a plastocyanin-ferredoxin oxidoreductase, converting photonic excitation into a charge separation, which transfers an electron from the donor P700 chlorophyll pair to the spectroscopically characterized acceptors A0, A1, FX, FA and FB in turn. Oxidized P700 is reduced on the lumenal side of the thylakoid membrane by plastocyanin. The chain is Photosystem I P700 chlorophyll a apoprotein A1 from Welwitschia mirabilis (Tree tumbo).